The chain runs to 888 residues: Prodigiosin synthesizing transferase PigC (888 aa).

This sequence belongs to the PigC family.

The protein operates within antibiotic biosynthesis; prodigiosin biosynthesis. Involved in the biosynthesis of 2-methyl-3-n-amyl-pyrrole (MAP), one of the terminal products involved in the biosynthesis of the red antibiotic prodigiosin (Pig). Catalyzes the transfer of 2-methyl-3-n-amyl-pyrrole (MAP) to 4-methoxy-2,2'-bipyrrole-5-carbaldehyde (MBC) to yield prodigiosin. It is able to use substrates with a variety of monocyclic rings in place of the pyrrolic ring A of its natural substrate. The polypeptide is Prodigiosin synthesizing transferase PigC (Serratia marcescens).